Here is a 123-residue protein sequence, read N- to C-terminus: Small ribosomal subunit protein uS12 (123 aa).

D89 is modified (3-methylthioaspartic acid).

The protein belongs to the universal ribosomal protein uS12 family. In terms of assembly, part of the 30S ribosomal subunit. Contacts proteins S8 and S17. May interact with IF1 in the 30S initiation complex.

In terms of biological role, with S4 and S5 plays an important role in translational accuracy. Functionally, interacts with and stabilizes bases of the 16S rRNA that are involved in tRNA selection in the A site and with the mRNA backbone. Located at the interface of the 30S and 50S subunits, it traverses the body of the 30S subunit contacting proteins on the other side and probably holding the rRNA structure together. The combined cluster of proteins S8, S12 and S17 appears to hold together the shoulder and platform of the 30S subunit. This is Small ribosomal subunit protein uS12 from Orientia tsutsugamushi (strain Ikeda) (Rickettsia tsutsugamushi).